Reading from the N-terminus, the 83-residue chain is Exodeoxyribonuclease 7 small subunit (83 aa).

This sequence belongs to the XseB family. As to quaternary structure, heterooligomer composed of large and small subunits.

The protein localises to the cytoplasm. It carries out the reaction Exonucleolytic cleavage in either 5'- to 3'- or 3'- to 5'-direction to yield nucleoside 5'-phosphates.. Functionally, bidirectionally degrades single-stranded DNA into large acid-insoluble oligonucleotides, which are then degraded further into small acid-soluble oligonucleotides. This is Exodeoxyribonuclease 7 small subunit from Rhizobium meliloti (strain 1021) (Ensifer meliloti).